The chain runs to 141 residues: Cystatin (141 aa).

The N-terminal stretch at 1 to 26 is a signal peptide; the sequence is MVHSQLPVAASLRLLCALLLLPSATM. Residues 29–129 enclose the Cystatin domain; it reads GGLSPRSVTD…CRFQVWSRPW (101 aa). Positions 73 to 77 match the Secondary area of contact motif; sequence QVVAG. Intrachain disulfides connect Cys91/Cys107 and Cys120/Cys140.

This sequence belongs to the cystatin family. Expressed by the venom gland at an extremely low level (at protein level).

It is found in the secreted. Its function is as follows. Inhibits various C1 cysteine proteases including cathepsin L, papain and cathepsin B. This protein has no toxic activity and its function in the venom is unknown. It may play a role as a housekeeping or regulatory protein. This Cryptophis nigrescens (Eastern small-eyed snake) protein is Cystatin.